Here is a 115-residue protein sequence, read N- to C-terminus: Nitrogenase-stabilizing/protective protein NifW (115 aa).

Belongs to the NifW family. Homotrimer; associates with NifD.

May protect the nitrogenase Fe-Mo protein from oxidative damage. The polypeptide is Nitrogenase-stabilizing/protective protein NifW (Stutzerimonas stutzeri (strain A1501) (Pseudomonas stutzeri)).